A 298-amino-acid chain; its full sequence is Protein ILRUN (298 aa).

The interval 199–277 (NTQPHRKVEG…SVNLSPSSHA (79 aa)) is disordered. Phosphoserine occurs at positions 215 and 222. The span at 242–255 (TWAPAPDTWAPAPD) shows a compositional bias: low complexity. Over residues 262-277 (NRLSQNSVNLSPSSHA) the composition is skewed to polar residues. Phosphoserine is present on serine 272.

As to quaternary structure, interacts with IRF3; the interaction inhibits IRF3 binding to its DNA consensus sequence. As to expression, expressed in lung (at protein level).

The protein localises to the cytoplasm. Its subcellular location is the nucleus. Its function is as follows. Negative regulator of innate antiviral response. Blocks IRF3-dependent cytokine production such as IFNA, IFNB and TNF. Interacts with IRF3 and inhibits IRF3 recruitment to type I IFN promoter sequences while also reducing nuclear levels of the coactivators EP300 and CREBBP. The sequence is that of Protein ILRUN from Homo sapiens (Human).